Consider the following 338-residue polypeptide: Glyceraldehyde-3-phosphate dehydrogenase (338 aa).

5 residues coordinate NAD(+): arginine 13, isoleucine 14, aspartate 35, arginine 80, and serine 123. Serine 152, cysteine 153, threonine 154, threonine 183, arginine 198, threonine 212, glycine 213, and arginine 235 together coordinate D-glyceraldehyde 3-phosphate. Cysteine 153 functions as the Nucleophile in the catalytic mechanism. Residue asparagine 317 coordinates NAD(+).

The protein belongs to the glyceraldehyde-3-phosphate dehydrogenase family. As to quaternary structure, homotetramer.

It is found in the tegument membrane. It carries out the reaction D-glyceraldehyde 3-phosphate + phosphate + NAD(+) = (2R)-3-phospho-glyceroyl phosphate + NADH + H(+). It participates in carbohydrate degradation; glycolysis; pyruvate from D-glyceraldehyde 3-phosphate: step 1/5. Functionally, this antigen is associated with human resistance to schistosomiasis. This chain is Glyceraldehyde-3-phosphate dehydrogenase, found in Schistosoma mansoni (Blood fluke).